A 152-amino-acid polypeptide reads, in one-letter code: Methylglyoxal synthase (152 aa).

In terms of domain architecture, MGS-like spans 6–152; the sequence is RTMATAKNIA…YQHYLNGRLK (147 aa). Residues His19, Lys23, 45 to 48, and 65 to 66 each bind substrate; these read TGTT and SG. Catalysis depends on Asp71, which acts as the Proton donor/acceptor. Substrate is bound at residue His98.

This sequence belongs to the methylglyoxal synthase family.

The enzyme catalyses dihydroxyacetone phosphate = methylglyoxal + phosphate. Its function is as follows. Catalyzes the formation of methylglyoxal from dihydroxyacetone phosphate. In Photorhabdus laumondii subsp. laumondii (strain DSM 15139 / CIP 105565 / TT01) (Photorhabdus luminescens subsp. laumondii), this protein is Methylglyoxal synthase.